Reading from the N-terminus, the 341-residue chain is Gibberellin 2-beta-dioxygenase 2 (341 aa).

The 105-residue stretch at 179 to 283 (KSDSCLRLNH…RISMIYFGGP (105 aa)) folds into the Fe2OG dioxygenase domain. The Fe cation site is built by His-207, Asp-209, and His-264. Arg-274 is a catalytic residue. Arg-274 is a binding site for 2-oxoglutarate.

The protein belongs to the iron/ascorbate-dependent oxidoreductase family. GA2OX subfamily. It depends on Fe(2+) as a cofactor. Preferentially expressed in flowers, siliques, and upper stems. Expressed in cotyledons, at the base of the shoot apical meristem and developing leaf primordia.

It catalyses the reaction gibberellin A1 + 2-oxoglutarate + O2 = gibberellin A8 + succinate + CO2. The protein operates within plant hormone biosynthesis; gibberellin biosynthesis. Functionally, catalyzes the 2-beta-hydroxylation of several biologically active gibberellins, leading to the homeostatic regulation of their endogenous level. Catabolism of gibberellins (GAs) plays a central role in plant development. Converts GA9/GA20 to GA51/GA29 and GA4/GA1 to GA34/GA8. In Arabidopsis thaliana (Mouse-ear cress), this protein is Gibberellin 2-beta-dioxygenase 2 (GA2OX2).